A 273-amino-acid polypeptide reads, in one-letter code: Formamidopyrimidine-DNA glycosylase (273 aa).

Catalysis depends on Pro2, which acts as the Schiff-base intermediate with DNA. The active-site Proton donor is the Glu3. Lys57 functions as the Proton donor; for beta-elimination activity in the catalytic mechanism. The DNA site is built by His91, Arg110, and Lys151. The segment at 236–270 adopts an FPG-type zinc-finger fold; that stretch reads QVYGRKGEACNDCGTIIEAKVIGQRNSYFCPHCQI. Arg260 serves as the catalytic Proton donor; for delta-elimination activity.

This sequence belongs to the FPG family. As to quaternary structure, monomer. It depends on Zn(2+) as a cofactor.

It carries out the reaction Hydrolysis of DNA containing ring-opened 7-methylguanine residues, releasing 2,6-diamino-4-hydroxy-5-(N-methyl)formamidopyrimidine.. The enzyme catalyses 2'-deoxyribonucleotide-(2'-deoxyribose 5'-phosphate)-2'-deoxyribonucleotide-DNA = a 3'-end 2'-deoxyribonucleotide-(2,3-dehydro-2,3-deoxyribose 5'-phosphate)-DNA + a 5'-end 5'-phospho-2'-deoxyribonucleoside-DNA + H(+). Functionally, involved in base excision repair of DNA damaged by oxidation or by mutagenic agents. Acts as a DNA glycosylase that recognizes and removes damaged bases. Has a preference for oxidized purines, such as 7,8-dihydro-8-oxoguanine (8-oxoG). Has AP (apurinic/apyrimidinic) lyase activity and introduces nicks in the DNA strand. Cleaves the DNA backbone by beta-delta elimination to generate a single-strand break at the site of the removed base with both 3'- and 5'-phosphates. This Actinobacillus pleuropneumoniae serotype 7 (strain AP76) protein is Formamidopyrimidine-DNA glycosylase.